A 156-amino-acid polypeptide reads, in one-letter code: Crossover junction endodeoxyribonuclease RuvC (156 aa).

Active-site residues include D7, E66, and D138. Positions 7, 66, and 138 each coordinate Mg(2+).

It belongs to the RuvC family. Homodimer which binds Holliday junction (HJ) DNA. The HJ becomes 2-fold symmetrical on binding to RuvC with unstacked arms; it has a different conformation from HJ DNA in complex with RuvA. In the full resolvosome a probable DNA-RuvA(4)-RuvB(12)-RuvC(2) complex forms which resolves the HJ. It depends on Mg(2+) as a cofactor.

Its subcellular location is the cytoplasm. It carries out the reaction Endonucleolytic cleavage at a junction such as a reciprocal single-stranded crossover between two homologous DNA duplexes (Holliday junction).. The RuvA-RuvB-RuvC complex processes Holliday junction (HJ) DNA during genetic recombination and DNA repair. Endonuclease that resolves HJ intermediates. Cleaves cruciform DNA by making single-stranded nicks across the HJ at symmetrical positions within the homologous arms, yielding a 5'-phosphate and a 3'-hydroxyl group; requires a central core of homology in the junction. The consensus cleavage sequence is 5'-(A/T)TT(C/G)-3'. Cleavage occurs on the 3'-side of the TT dinucleotide at the point of strand exchange. HJ branch migration catalyzed by RuvA-RuvB allows RuvC to scan DNA until it finds its consensus sequence, where it cleaves and resolves the cruciform DNA. In Ehrlichia chaffeensis (strain ATCC CRL-10679 / Arkansas), this protein is Crossover junction endodeoxyribonuclease RuvC.